The chain runs to 199 residues: Casparian strip membrane protein 1 (199 aa).

Over 1–37 the chain is Cytoplasmic; the sequence is MKSESAAIDIPESSSVAKGKAPLIAVSRNEKGGYRKG. Residues 38 to 58 traverse the membrane as a helical segment; the sequence is IAIFDFILRLAAIATALAAAA. The Extracellular segment spans residues 59-87; sequence AMGTSDETLPFFTQFFQFQASYDDLPTFQ. The chain crosses the membrane as a helical span at residues 88-108; the sequence is FFVIAIAIVGGYLVLSLPFSI. Topologically, residues 109-120 are cytoplasmic; sequence VAIVRPHAVGPR. Residues 121 to 141 form a helical membrane-spanning segment; that stretch reads LLLIILDAVALTLNTAAGAAA. At 142-173 the chain is on the extracellular side; the sequence is AAIVYLAHNGNSNTNWLAICQQYGDFCQKVSG. Residues 174–194 traverse the membrane as a helical segment; it reads AVVASFITVVIFVFLIVLSAF. Residues 195–199 are Cytoplasmic-facing; it reads ALRRH.

It belongs to the Casparian strip membrane proteins (CASP) family. In terms of assembly, homodimer and heterodimers.

The protein resides in the cell membrane. In terms of biological role, regulates membrane-cell wall junctions and localized cell wall deposition. Required for establishment of the Casparian strip membrane domain (CSD) and the subsequent formation of Casparian strips, a cell wall modification of the root endodermis that determines an apoplastic barrier between the intraorganismal apoplasm and the extraorganismal apoplasm and prevents lateral diffusion. The polypeptide is Casparian strip membrane protein 1 (Populus trichocarpa (Western balsam poplar)).